A 1082-amino-acid chain; its full sequence is Probable arabinosyltransferase B (1082 aa).

13 helical membrane passes run 28–50 (WVAT…LPVT), 223–241 (LAAM…LALW), 262–281 (VTAV…VIGA), 333–352 (SIWI…LLLS), 359–381 (LGPA…LGAW), 420–442 (AITT…AALL), 462–481 (WPLI…VVFA), 522–544 (AISR…FMML), 557–574 (AWRL…LMFT), 578–600 (WTHH…TVLV), 613–635 (AFLS…WWYV), 650–672 (GGVQ…AFWL), and 689–711 (APIP…IGVV).

The protein belongs to the emb family.

It localises to the cell membrane. Functionally, arabinosyl transferase responsible for the polymerization of arabinose into the arabinan of arabinogalactan. The sequence is that of Probable arabinosyltransferase B (embB) from Mycolicibacterium smegmatis (Mycobacterium smegmatis).